The primary structure comprises 355 residues: uncharacterized protein (355 aa).

This is an uncharacterized protein from Acanthamoeba polyphaga (Amoeba).